A 212-amino-acid polypeptide reads, in one-letter code: Thymidylate kinase (212 aa).

10–17 (GLEGAGKT) provides a ligand contact to ATP.

This sequence belongs to the thymidylate kinase family.

It carries out the reaction dTMP + ATP = dTDP + ADP. Functionally, phosphorylation of dTMP to form dTDP in both de novo and salvage pathways of dTTP synthesis. The polypeptide is Thymidylate kinase (Yersinia enterocolitica serotype O:8 / biotype 1B (strain NCTC 13174 / 8081)).